Reading from the N-terminus, the 47-residue chain is uncharacterized protein (47 aa).

The N-terminal stretch at 1–18 (MKKWLLIIAGALIISACA) is a signal peptide. Positions 28–47 (EGSHSGVKFDKDSRQWGLNQ) are disordered.

This is an uncharacterized protein from Haemophilus influenzae (strain ATCC 51907 / DSM 11121 / KW20 / Rd).